The sequence spans 564 residues: Diacylglycerol kinase epsilon (564 aa).

Residues 20–40 form a helical membrane-spanning segment; that stretch reads LVLWTLCSVLLPVFITLWCSL. 2 Phorbol-ester/DAG-type zinc fingers span residues 57-106 and 121-174; these read KHCW…RFPC and PHHW…SEKC. One can recognise a DAGKc domain in the interval 212–353; sequence KQWTPLIILA…LDRWKVQVTN (142 aa).

It belongs to the eukaryotic diacylglycerol kinase family. Highly expressed in brain and heart. In brain, highly expressed in Purkinje cells of the cerebellum, pyramidal cells of the hippocampus, mitral cells of the olfactory bulb, and neurons of the substantia nigra. Lower expression in neurons of the thalamus, superior olive, and lateral reticular nucleus is also detected. Expressed in platelets.

Its subcellular location is the membrane. The protein localises to the cytoplasm. The catalysed reaction is a 1,2-diacyl-sn-glycerol + ATP = a 1,2-diacyl-sn-glycero-3-phosphate + ADP + H(+). The enzyme catalyses 1-hexadecanoyl-2-(5Z,8Z,11Z,14Z-eicosatetraenoyl)-sn-glycerol + ATP = 1-hexadecanoyl-2-(5Z,8Z,11Z,14Z-eicosatetraenoyl)-sn-glycero-3-phosphate + ADP + H(+). It catalyses the reaction 1-octadecanoyl-2-(5Z,8Z,11Z,14Z-eicosatetraenoyl)-sn-glycerol + ATP = 1-octadecanoyl-2-(5Z,8Z,11Z,14Z-eicosatetraenoyl)-sn-glycero-3-phosphate + ADP + H(+). It carries out the reaction 1-eicosanoyl-2-(5Z,8Z,11Z,14Z)-eicosatetraenoyl-sn-glycerol + ATP = 1-eicosanoyl-2-(5Z,8Z,11Z,14Z)-eicosatetraenoyl-sn-glycero-3-phosphate + ADP + H(+). The catalysed reaction is 1,2-di-(5Z,8Z,11Z,14Z)-eicosatetraenoyl-sn-glycerol + ATP = 1,2-di-(5Z,8Z,11Z,14Z)-eicosatetraenoyl-sn-glycero-3-phosphate + ADP + H(+). The enzyme catalyses 1-octadecanoyl-2-(9Z,12Z)-octadecadienoyl-sn-glycerol + ATP = 1-octadecanoyl-2-(9Z,12Z-octadecadienoyl)-sn-glycero-3-phosphate + ADP + H(+). It catalyses the reaction 1,2-di-(9Z,12Z-octadecadienoyl)-sn-glycerol + ATP = 1,2-di-(9Z,12Z-octadecadienoyl)-sn-glycero-3-phosphate + ADP + H(+). It carries out the reaction 1,2-di-(9Z-octadecenoyl)-sn-glycerol + ATP = 1,2-di-(9Z-octadecenoyl)-sn-glycero-3-phosphate + ADP + H(+). The protein operates within lipid metabolism; glycerolipid metabolism. Its function is as follows. Membrane-bound diacylglycerol kinase that converts diacylglycerol/DAG into phosphatidic acid/phosphatidate/PA and regulates the respective levels of these two bioactive lipids. Thereby, acts as a central switch between the signaling pathways activated by these second messengers with different cellular targets and opposite effects in numerous biological processes. Also plays an important role in the biosynthesis of complex lipids. Displays specificity for diacylglycerol substrates with an arachidonoyl acyl chain at the sn-2 position, with the highest activity toward 1-octadecanoyl-2-(5Z,8Z,11Z,14Z-eicosatetraenoyl)-sn-glycerol the main diacylglycerol intermediate within the phosphatidylinositol turnover cycle. Can also phosphorylate diacylglycerol substrates with a linoleoyl acyl chain at the sn-2 position but much less efficiently. In Mus musculus (Mouse), this protein is Diacylglycerol kinase epsilon (Dgke).